A 200-amino-acid chain; its full sequence is Protein GrpE (200 aa).

Residues 1 to 23 (MEEEIKETSEDKEEENTEAEAVE) show a composition bias toward acidic residues. A disordered region spans residues 1–39 (MEEEIKETSEDKEEENTEAEAVENNEKSEENAGNVEEDE).

Belongs to the GrpE family. In terms of assembly, homodimer.

Its subcellular location is the cytoplasm. Participates actively in the response to hyperosmotic and heat shock by preventing the aggregation of stress-denatured proteins, in association with DnaK and GrpE. It is the nucleotide exchange factor for DnaK and may function as a thermosensor. Unfolded proteins bind initially to DnaJ; upon interaction with the DnaJ-bound protein, DnaK hydrolyzes its bound ATP, resulting in the formation of a stable complex. GrpE releases ADP from DnaK; ATP binding to DnaK triggers the release of the substrate protein, thus completing the reaction cycle. Several rounds of ATP-dependent interactions between DnaJ, DnaK and GrpE are required for fully efficient folding. This is Protein GrpE from Brachyspira hyodysenteriae (strain ATCC 49526 / WA1).